Consider the following 291-residue polypeptide: Putative GATA transcription factor 13 (291 aa).

Residues Lys-187 to Pro-241 form a GATA-type zinc finger. The tract at residues Thr-271–Gln-291 is disordered.

It belongs to the type IV zinc-finger family. Class A subfamily.

It is found in the nucleus. Transcriptional activator that specifically binds 5'-GATA-3' or 5'-GAT-3' motifs within gene promoters. May be involved in the regulation of some light-responsive genes. The protein is Putative GATA transcription factor 13 (GATA13) of Arabidopsis thaliana (Mouse-ear cress).